The primary structure comprises 386 residues: Cystathionine gamma-synthase (386 aa).

Lys198 carries the N6-(pyridoxal phosphate)lysine modification.

This sequence belongs to the trans-sulfuration enzymes family. In terms of assembly, homotetramer. It depends on pyridoxal 5'-phosphate as a cofactor.

The protein localises to the cytoplasm. The catalysed reaction is O-succinyl-L-homoserine + L-cysteine = L,L-cystathionine + succinate + H(+). It functions in the pathway amino-acid biosynthesis; L-methionine biosynthesis via de novo pathway; L-cystathionine from O-succinyl-L-homoserine: step 1/1. In terms of biological role, catalyzes the formation of L-cystathionine from O-succinyl-L-homoserine (OSHS) and L-cysteine, via a gamma-replacement reaction. In the absence of thiol, catalyzes gamma-elimination to form 2-oxobutanoate, succinate and ammonia. This chain is Cystathionine gamma-synthase (metB), found in Escherichia coli (strain K12).